The chain runs to 309 residues: Cutinase (309 aa).

The first 47 residues, 1–47, serve as a signal peptide directing secretion; the sequence is MSALTSQPTSSGSSEKIPRLRGWRAKAAGVVLAALALTTGVAAPAPA. Residue Ser-178 is the Nucleophile of the active site. Catalysis depends on charge relay system residues Asp-224 and His-256. A disulfide bond links Cys-289 and Cys-305.

It belongs to the AB hydrolase superfamily.

It is found in the secreted. It catalyses the reaction a carboxylic ester + H2O = an alcohol + a carboxylate + H(+). The catalysed reaction is a triacylglycerol + H2O = a diacylglycerol + a fatty acid + H(+). The enzyme catalyses 1,2,3-tri-(9Z-octadecenoyl)-glycerol + H2O = di-(9Z)-octadecenoylglycerol + (9Z)-octadecenoate + H(+). It carries out the reaction (6-hydroxyhexanoyl)(n) + H2O = (6-hydroxyhexanoyl)(n-1) + 6-hydroxyhexanoate + H(+). It catalyses the reaction cutin + H2O = cutin monomers.. No effect on activity by SDS or chelating agents ethylenediaminetetraacetic acid (EDTA) or sodium citrate. No effect on activity by metal ions Ag(+), Ba(2+), Ca(2+), Co(2+), Cu(2+), Mn(2+), Ni(2+), Pb(2+) or Zn(2+). Activated by 1 mM digitonin and sodium deoxycholate, and reducing agents 1 mM 1,4-dithiothreitol, beta-mercaptoethanol and ascorbic acid. Activated by benzene, n-hexane, p-xylene and toluene. Activated by Fe(3+). Inhibited slightly by 1 mM of different chain length fatty acids, and only marginally by 6.0 M urea. Inhibited strongly with chemical modification by reagents phenyl methyl sulfonylfluorid (PMSF), 1-ethyl-3-(3-dimethylaminopropyl) carbodiimide (EDAC), diethylpyrocarbonate (DEPC) and N-bromosuccinimide (NBS). Inhibited by pyridine, DMSO, t-butanol and dodecane. Inhibited by Li(+), Hg(2+) and Mg(2+). No inhibition with chemical modification by reagents N-acetylimidazole (NAI), citraconic anhydride (CA), iodoacetate (IA) and phenylglyoxal (PG). Its function is as follows. Catalyzes the hydrolysis of cutin, a polyester that forms the structure of plant cuticle. Shows esterase activity towards p-nitrophenol-linked aliphatic esters (pNP-aliphatic esters). Has a preference for medium chain length (C-4 to C-12) fatty acid esters. Active with p-nitrophenyl palmitate (p-NPP) as substrate. Hydrolyzes triacylglycerol substrates non-specifically with a preference for long, unsaturated fatty acyl chains with the highest activity for triolein. Substrates with cis-9 unsaturation are preferred over the saturated triacylglycerols. Hydrolyzes a wide range of natural oils, especially olive oil, with relatively high activity. Capable of catalyzing synthesis of the flavor ester isoamyl acetate by esterification of isoamyl alcohol using acetic acid as an acyl donor. Degrades synthetic aliphatic polyesters, namely poly(1,4-butylene succinate) extended with 1,6-diisocyanatohexane (PBSc-D) and poly(epsilon-caprolactone) (PCL) plastics. Does not degrade poly(lactic acid) (PLA) nor aromatic poly(ethylene terephthalate) (PET), the most abundant polyester plastic in the world. This chain is Cutinase, found in Amycolatopsis mediterranei (strain S699) (Nocardia mediterranei).